Consider the following 432-residue polypeptide: Adenylosuccinate synthetase (432 aa).

Residues 13–19 and 41–43 each bind GTP; these read GDEGKGK and GHT. Asp14 serves as the catalytic Proton acceptor. Residues Asp14 and Gly41 each contribute to the Mg(2+) site. Residues 14–17, 39–42, Thr130, Arg144, Gln225, Thr240, and Arg304 each bind IMP; these read DEGK and NAGH. The Proton donor role is filled by His42. Position 300–306 (300–306) interacts with substrate; that stretch reads ATTGRSR. GTP contacts are provided by residues Arg306, 332 to 334, and 415 to 417; these read KLD and STG.

Belongs to the adenylosuccinate synthetase family. Homodimer. Mg(2+) serves as cofactor.

It localises to the cytoplasm. It catalyses the reaction IMP + L-aspartate + GTP = N(6)-(1,2-dicarboxyethyl)-AMP + GDP + phosphate + 2 H(+). Its pathway is purine metabolism; AMP biosynthesis via de novo pathway; AMP from IMP: step 1/2. Functionally, plays an important role in the de novo pathway of purine nucleotide biosynthesis. Catalyzes the first committed step in the biosynthesis of AMP from IMP. In Yersinia pestis bv. Antiqua (strain Antiqua), this protein is Adenylosuccinate synthetase.